A 370-amino-acid polypeptide reads, in one-letter code: D-alanine--D-alanine ligase (370 aa).

An ATP-grasp domain is found at 144–352; the sequence is KKIFADAGIP…YGALIERLVD (209 aa). 177–232 contacts ATP; the sequence is EEVLTYPVFVKPANLGSSVGISKATNKKELVDAMTEAFLYDRRVVVEQGVVAREIE. Positions 306, 319, and 321 each coordinate Mg(2+).

The protein belongs to the D-alanine--D-alanine ligase family. It depends on Mg(2+) as a cofactor. Requires Mn(2+) as cofactor.

It localises to the cytoplasm. The enzyme catalyses 2 D-alanine + ATP = D-alanyl-D-alanine + ADP + phosphate + H(+). Its pathway is cell wall biogenesis; peptidoglycan biosynthesis. In terms of biological role, cell wall formation. The sequence is that of D-alanine--D-alanine ligase from Listeria monocytogenes serovar 1/2a (strain ATCC BAA-679 / EGD-e).